Reading from the N-terminus, the 115-residue chain is Disintegrin EC6 subunit alpha (115 aa).

The first 20 residues, 1 to 20 (MIQVLLVIICLAVFPYQGSS), serve as a signal peptide directing secretion. Residues 21–47 (IILESGNINDYEIVYPKKVAVLPTGAM) constitute a propeptide that is removed on maturation. Residues 48–112 (NSVHPCCDPV…DCPRNRYKGK (65 aa)) form the Disintegrin domain. 4 disulfides stabilise this stretch: Cys-53–Cys-76, Cys-67–Cys-73, Cys-72–Cys-97, and Cys-85–Cys-104. The short motif at 89 to 91 (MLD) is the Cell attachment site; atypical (MLD) element.

The protein belongs to the disintegrin family. Dimeric disintegrin subfamily. Heterodimer with subunit beta; disulfide-linked. Expressed by the venom gland.

The protein localises to the secreted. Functionally, potently inhibits adhesion of alpha-4/beta-1 (ITGA4/ITGB1) and alpha-9/beta-1 (ITGA9/ITGB1) integrins to VCAM1, and adhesion of alpha-5/beta-1 (ITGA5/ITGB1) integrin to fibronectin. Has a much less effect on alpha-IIb/beta-3 (ITGA2B/ITGB3) integrin. Also potently inhibits neutrophil migration across TNF-alpha-activated human umbilical endothelial cells. This chain is Disintegrin EC6 subunit alpha, found in Echis carinatus sochureki (Saw-scaled viper).